The sequence spans 455 residues: Polyadenylation factor subunit 2 (455 aa).

7 WD repeats span residues 80 to 119 (KVKHVIPAIQWSPEGRRLIVATFSGEFSLWNGSSFTFETI), 122 to 162 (AHDT…KELD), 164 to 203 (IHTEGIRDVAFSNNDSKFVTCSDDNILKIWNFSNGQQERV), 206 to 245 (GHHWDVRSCDWHPELGLIVSGSKDNLVKLWDPRSGQCVST), 248 to 288 (KFKH…NELM), 291 to 331 (RDEV…EKPI), and 337 to 376 (AHEKCISAIAYNPVGHILATAAKDRTIRFWTRARPVDPNA). 2 disordered regions span residues 406 to 425 (EYGAAPPPASTAFPQQTQYN) and 430 to 455 (RVPEIKEPTPTTDKEQRTSILPGLSI). A compositionally biased stretch (basic and acidic residues) spans 432–446 (PEIKEPTPTTDKEQR).

The protein resides in the nucleus. Functionally, required for 3'-end cleavage and polyadenylation of pre-mRNAs. Also involved in chromosome segregation where it has a role in chromosome attachment to the mitotic spindle. In Candida glabrata (strain ATCC 2001 / BCRC 20586 / JCM 3761 / NBRC 0622 / NRRL Y-65 / CBS 138) (Yeast), this protein is Polyadenylation factor subunit 2 (PFS2).